A 405-amino-acid chain; its full sequence is S-adenosylmethionine:tRNA ribosyltransferase-isomerase (405 aa).

It belongs to the QueA family. Monomer.

The protein localises to the cytoplasm. It carries out the reaction 7-aminomethyl-7-carbaguanosine(34) in tRNA + S-adenosyl-L-methionine = epoxyqueuosine(34) in tRNA + adenine + L-methionine + 2 H(+). It functions in the pathway tRNA modification; tRNA-queuosine biosynthesis. In terms of biological role, transfers and isomerizes the ribose moiety from AdoMet to the 7-aminomethyl group of 7-deazaguanine (preQ1-tRNA) to give epoxyqueuosine (oQ-tRNA). This Psychrobacter cryohalolentis (strain ATCC BAA-1226 / DSM 17306 / VKM B-2378 / K5) protein is S-adenosylmethionine:tRNA ribosyltransferase-isomerase.